A 178-amino-acid chain; its full sequence is MNAHEALAEIAGKMFGDNAKKVMMVLASNVEVSDEDLAKDLKMDPPELRKLLNDLFEARLVKYRRARDENIGWYKYYWRITDEPIQQILSDRKRLTLSILEKVLSLEENSETYVCPKCGTRYTVDEAENNNYTCEVCGEVLEPFDNTHRVEKLKRAIELLGNWDPSPKQQASRAIPHA.

Positions 3–86 (AHEALAEIAG…YWRITDEPIQ (84 aa)) constitute an HTH TFE/IIEalpha-type domain.

Belongs to the TFE family. In terms of assembly, monomer. Interaction with RNA polymerase subunits RpoF and RpoE is necessary for Tfe stimulatory transcription activity. Able to interact with Tbp and RNA polymerase in the absence of DNA promoter. Interacts both with the preinitiation and elongation complexes.

In terms of biological role, transcription factor that plays a role in the activation of archaeal genes transcribed by RNA polymerase. Facilitates transcription initiation by enhancing TATA-box recognition by TATA-box-binding protein (Tbp), and transcription factor B (Tfb) and RNA polymerase recruitment. Not absolutely required for transcription in vitro, but particularly important in cases where Tbp or Tfb function is not optimal. It dynamically alters the nucleic acid-binding properties of RNA polymerases by stabilizing the initiation complex and destabilizing elongation complexes. Seems to translocate with the RNA polymerase following initiation and acts by binding to the non template strand of the transcription bubble in elongation complexes. This chain is Transcription factor E, found in Thermofilum pendens (strain DSM 2475 / Hrk 5).